A 368-amino-acid polypeptide reads, in one-letter code: Phosphate acyltransferase (368 aa).

The tract at residues 334-368 (AAPLGESGRDANGAGQASPSAGQPAEPSAALSSKT) is disordered.

This sequence belongs to the PlsX family. As to quaternary structure, homodimer. Probably interacts with PlsY.

Its subcellular location is the cytoplasm. The catalysed reaction is a fatty acyl-[ACP] + phosphate = an acyl phosphate + holo-[ACP]. Its pathway is lipid metabolism; phospholipid metabolism. Catalyzes the reversible formation of acyl-phosphate (acyl-PO(4)) from acyl-[acyl-carrier-protein] (acyl-ACP). This enzyme utilizes acyl-ACP as fatty acyl donor, but not acyl-CoA. The protein is Phosphate acyltransferase of Burkholderia pseudomallei (strain 1106a).